Here is a 159-residue protein sequence, read N- to C-terminus: Endoribonuclease YbeY (159 aa).

Residues H125, H129, and H135 each contribute to the Zn(2+) site.

This sequence belongs to the endoribonuclease YbeY family. It depends on Zn(2+) as a cofactor.

The protein resides in the cytoplasm. In terms of biological role, single strand-specific metallo-endoribonuclease involved in late-stage 70S ribosome quality control and in maturation of the 3' terminus of the 16S rRNA. This Brevibacillus brevis (strain 47 / JCM 6285 / NBRC 100599) protein is Endoribonuclease YbeY.